The primary structure comprises 732 residues: Polyribonucleotide nucleotidyltransferase (732 aa).

Positions 516 and 522 each coordinate Mg(2+). The KH domain occupies 582-642 (PSSHTITVHP…PKVIAACDYI (61 aa)). Residues 659 to 726 (GDILKGKIKR…KGHKIELGLR (68 aa)) enclose the S1 motif domain.

This sequence belongs to the polyribonucleotide nucleotidyltransferase family. It depends on Mg(2+) as a cofactor.

The protein localises to the cytoplasm. The enzyme catalyses RNA(n+1) + phosphate = RNA(n) + a ribonucleoside 5'-diphosphate. In terms of biological role, involved in mRNA degradation. Catalyzes the phosphorolysis of single-stranded polyribonucleotides processively in the 3'- to 5'-direction. The polypeptide is Polyribonucleotide nucleotidyltransferase (Nitratiruptor sp. (strain SB155-2)).